The chain runs to 171 residues: Alpha-amylase/trypsin inhibitor CMd (171 aa).

The N-terminal stretch at 1–24 (MACKSSRSLLLLATVMVSVFAAAA) is a signal peptide.

It belongs to the protease inhibitor I6 (cereal trypsin/alpha-amylase inhibitor) family. In terms of assembly, heterotetramer of one CMa, one CMb and two CMd chains. Five disulfide bonds, which are essential for the inhibitor activity, are probably present. In terms of tissue distribution, endosperm.

It is found in the secreted. Its function is as follows. Part of a complex with inhibitory activity, but CMd is inactive as a separate subunit. This Hordeum vulgare (Barley) protein is Alpha-amylase/trypsin inhibitor CMd (IAT3).